The chain runs to 885 residues: High affinity cAMP-specific and IBMX-insensitive 3',5'-cyclic phosphodiesterase 8B (885 aa).

2 disordered regions span residues Arg18–Pro41 and Thr72–Arg95. The span at Ser23–Gln34 shows a compositional bias: polar residues. Low complexity predominate over residues Gly75–Ser90. Residues Ala267 to Gly338 form the PAS domain. The tract at residues Ile393–Arg436 is disordered. The segment covering Ser422–Arg436 has biased composition (polar residues). Position 517 is a phosphoserine (Ser517). The PDEase domain maps to Thr539 to Lys875. His615 functions as the Proton donor in the catalytic mechanism. Residues His619, His655, and Asp656 each coordinate a divalent metal cation. Ser754 bears the Phosphoserine mark. Asp781 contributes to the a divalent metal cation binding site.

It belongs to the cyclic nucleotide phosphodiesterase family. PDE8 subfamily. Requires a divalent metal cation as cofactor. Abundantly expressed in the thyroid. Also very weakly expressed in brain, spinal cord and placenta. In the thyroid isoform 1 predominates, and isoforms 2 and 6 are also highly expressed. In the placenta isoforms 1 and 2 are expressed equally. In the brain isoform 2 predominates.

It catalyses the reaction 3',5'-cyclic AMP + H2O = AMP + H(+). The protein operates within purine metabolism; 3',5'-cyclic AMP degradation; AMP from 3',5'-cyclic AMP: step 1/1. With respect to regulation, inhibited by dipyridimole. Insensitive to selective PDE inhibitors including rolipram and milrinone as well as to the non-selective inhibitor, IBMX. Unaffected by cGMP. In terms of biological role, hydrolyzes the second messenger cAMP, which is a key regulator of many important physiological processes. May be involved in specific signaling in the thyroid gland. This Homo sapiens (Human) protein is High affinity cAMP-specific and IBMX-insensitive 3',5'-cyclic phosphodiesterase 8B (PDE8B).